The sequence spans 286 residues: Release factor glutamine methyltransferase (286 aa).

S-adenosyl-L-methionine is bound by residues 122–126 (GTGTG), D145, W173, and N188. 188-191 (NPPY) contributes to the substrate binding site.

This sequence belongs to the protein N5-glutamine methyltransferase family. PrmC subfamily.

The enzyme catalyses L-glutaminyl-[peptide chain release factor] + S-adenosyl-L-methionine = N(5)-methyl-L-glutaminyl-[peptide chain release factor] + S-adenosyl-L-homocysteine + H(+). Its function is as follows. Methylates the class 1 translation termination release factors RF1/PrfA and RF2/PrfB on the glutamine residue of the universally conserved GGQ motif. This chain is Release factor glutamine methyltransferase, found in Shewanella oneidensis (strain ATCC 700550 / JCM 31522 / CIP 106686 / LMG 19005 / NCIMB 14063 / MR-1).